Consider the following 502-residue polypeptide: Ribose import ATP-binding protein RbsA (502 aa).

ABC transporter domains follow at residues 3–239 (VTMR…VGRE) and 249–493 (AAPG…TGGA). 35–42 (GENGAGKS) contributes to the ATP binding site.

This sequence belongs to the ABC transporter superfamily. Ribose importer (TC 3.A.1.2.1) family. As to quaternary structure, the complex is composed of an ATP-binding protein (RbsA), two transmembrane proteins (RbsC) and a solute-binding protein (RbsB).

Its subcellular location is the cell inner membrane. The catalysed reaction is D-ribose(out) + ATP + H2O = D-ribose(in) + ADP + phosphate + H(+). Its function is as follows. Part of the ABC transporter complex RbsABC involved in ribose import. Responsible for energy coupling to the transport system. The polypeptide is Ribose import ATP-binding protein RbsA (Chromobacterium violaceum (strain ATCC 12472 / DSM 30191 / JCM 1249 / CCUG 213 / NBRC 12614 / NCIMB 9131 / NCTC 9757 / MK)).